A 237-amino-acid chain; its full sequence is Protein UL24 homolog (237 aa).

The protein belongs to the herpesviridae UL24 family.

In Equus caballus (Horse), this protein is Protein UL24 homolog (20).